The primary structure comprises 326 residues: Eukaryotic translation initiation factor 3 subunit I (326 aa).

5 WD repeats span residues Gly8 to Thr47, Gly50 to Ser89, Met145 to Asp184, Asp188 to Thr227, and Gly285 to Glu326.

The protein belongs to the eIF-3 subunit I family. In terms of assembly, component of the eukaryotic translation initiation factor 3 (eIF-3) complex. The eIF-3 complex interacts with pix.

The protein resides in the cytoplasm. Its function is as follows. Component of the eukaryotic translation initiation factor 3 (eIF-3) complex, which is involved in protein synthesis of a specialized repertoire of mRNAs and, together with other initiation factors, stimulates binding of mRNA and methionyl-tRNAi to the 40S ribosome. The eIF-3 complex specifically targets and initiates translation of a subset of mRNAs involved in cell proliferation. The protein is Eukaryotic translation initiation factor 3 subunit I of Drosophila sechellia (Fruit fly).